The primary structure comprises 321 residues: MGRKKISLIGGGQIGGVLAQLCALRELGDVVMFDIVEGMPQGKMLDIAEASPVDGFDVCLQGTQDYKDIAGSDVVIVTAGLPRKPGMSRDDLIATNSKIMTSVAEGIKQYASNAFVIIISNPLDAMVTLCQKITGMPANRVVGQAGVLDSARFKAFIAWELGVSVKDVSAMTLGGHGDDMVPLVRYAAVNGIPVMELLEQKYGAEKAKEVMEAMVNRTRLAGGEVVALLKTGSAFYSPASSAIAMAESVLKDQKRVLPTCCLLNGEFGVNGYYVGVPAVLGASGVEKILQFKLDATEQAMMDKSVAAVKGLVDSLDSILKG.

NAD(+) contacts are provided by residues 10–15 (GGGQIG) and Asp-34. 2 residues coordinate substrate: Arg-83 and Arg-89. Residues Asn-96 and 119–121 (ISN) contribute to the NAD(+) site. Residues Asn-121 and Arg-152 each coordinate substrate. The Proton acceptor role is filled by His-176.

Belongs to the LDH/MDH superfamily. MDH type 3 family.

The catalysed reaction is (S)-malate + NAD(+) = oxaloacetate + NADH + H(+). Functionally, catalyzes the reversible oxidation of malate to oxaloacetate. The polypeptide is Malate dehydrogenase (Trichlorobacter lovleyi (strain ATCC BAA-1151 / DSM 17278 / SZ) (Geobacter lovleyi)).